We begin with the raw amino-acid sequence, 191 residues long: Small ribosomal subunit protein uS5 (191 aa).

Residues 20 to 83 (FADRLVAINR…EQAKRQMIRV (64 aa)) enclose the S5 DRBM domain. The segment at 158–191 (TSPRMVAQRRGKKVSDILKKDGEPAEAAAEPAEA) is disordered. Residues 170–180 (KVSDILKKDGE) show a composition bias toward basic and acidic residues. Residues 182–191 (AEAAAEPAEA) show a composition bias toward low complexity.

It belongs to the universal ribosomal protein uS5 family. Part of the 30S ribosomal subunit. Contacts proteins S4 and S8.

Functionally, with S4 and S12 plays an important role in translational accuracy. Its function is as follows. Located at the back of the 30S subunit body where it stabilizes the conformation of the head with respect to the body. This chain is Small ribosomal subunit protein uS5, found in Dinoroseobacter shibae (strain DSM 16493 / NCIMB 14021 / DFL 12).